Reading from the N-terminus, the 467-residue chain is UDP-N-acetylmuramate--L-alanine ligase (467 aa).

Glycine 114–threonine 120 is a binding site for ATP.

The protein belongs to the MurCDEF family.

The protein localises to the cytoplasm. The catalysed reaction is UDP-N-acetyl-alpha-D-muramate + L-alanine + ATP = UDP-N-acetyl-alpha-D-muramoyl-L-alanine + ADP + phosphate + H(+). It participates in cell wall biogenesis; peptidoglycan biosynthesis. Functionally, cell wall formation. The protein is UDP-N-acetylmuramate--L-alanine ligase of Rhodopseudomonas palustris (strain ATCC BAA-98 / CGA009).